The sequence spans 337 residues: Glyceraldehyde-3-phosphate dehydrogenase 2 (337 aa).

NADP(+) contacts are provided by residues 11 to 12 (RI), aspartate 35, arginine 80, and threonine 122. Residues 153–155 (SCT), threonine 184, arginine 199, 212–213 (TG), and arginine 235 contribute to the D-glyceraldehyde 3-phosphate site. The Nucleophile role is filled by cysteine 154. Position 317 (asparagine 317) interacts with NADP(+).

This sequence belongs to the glyceraldehyde-3-phosphate dehydrogenase family. In terms of assembly, homotetramer.

It is found in the cytoplasm. It carries out the reaction D-glyceraldehyde 3-phosphate + phosphate + NADP(+) = (2R)-3-phospho-glyceroyl phosphate + NADPH + H(+). The enzyme catalyses D-glyceraldehyde 3-phosphate + phosphate + NAD(+) = (2R)-3-phospho-glyceroyl phosphate + NADH + H(+). Its pathway is carbohydrate biosynthesis; Calvin cycle. Gap2 has a major role in carbon fixation as a component of the Calvin cycle. Catalyzes the oxidative phosphorylation of glyceraldehyde 3-phosphate (G3P) to 1,3-bisphosphoglycerate (BPG) using the cofactor NAD. The first reaction step involves the formation of a hemiacetal intermediate between G3P and a cysteine residue, and this hemiacetal intermediate is then oxidized to a thioester, with concomitant reduction of NAD to NADH. The reduced NADH is then exchanged with the second NAD, and the thioester is attacked by a nucleophilic inorganic phosphate to produce BPG. The polypeptide is Glyceraldehyde-3-phosphate dehydrogenase 2 (gap2) (Trichormus variabilis (strain ATCC 29413 / PCC 7937) (Anabaena variabilis)).